The primary structure comprises 388 residues: Alcohol dehydrogenase-like 1 (388 aa).

Positions 53, 55, 76, 106, 109, 112, 120, and 185 each coordinate Zn(2+). An alcohol is bound by residues threonine 55 and histidine 76. NAD(+) is bound at residue threonine 55. Residues 210-215 (GLGAVG), aspartate 234, lysine 239, 304-306 (LGM), phenylalanine 331, and arginine 381 each bind NAD(+).

Belongs to the zinc-containing alcohol dehydrogenase family. Class-III subfamily. Homodimer. Zn(2+) serves as cofactor.

The protein resides in the cytoplasm. It catalyses the reaction a primary alcohol + NAD(+) = an aldehyde + NADH + H(+). The enzyme catalyses a secondary alcohol + NAD(+) = a ketone + NADH + H(+). The protein is Alcohol dehydrogenase-like 1 of Arabidopsis thaliana (Mouse-ear cress).